A 275-amino-acid polypeptide reads, in one-letter code: Small ribosomal subunit protein uS2 (275 aa).

The disordered stretch occupies residues 226–275 (AAAPNSASVREEEFSAEAGDEGKGRRAPAKKATEKKADAPAAAPEAPAAE). The segment covering 264-275 (APAAAPEAPAAE) has biased composition (low complexity).

This sequence belongs to the universal ribosomal protein uS2 family.

This is Small ribosomal subunit protein uS2 from Xanthomonas campestris pv. campestris (strain ATCC 33913 / DSM 3586 / NCPPB 528 / LMG 568 / P 25).